A 361-amino-acid polypeptide reads, in one-letter code: 3,6-anhydro-alpha-L-galactonate cycloisomerase (361 aa).

The active-site Proton acceptor is lysine 166. Positions 195, 221, and 247 each coordinate Mg(2+). Histidine 297 (proton donor/acceptor) is an active-site residue.

It belongs to the mandelate racemase/muconate lactonizing enzyme family. The cofactor is Mg(2+).

It catalyses the reaction 3,6-anhydro-L-galactonate = 2-dehydro-3-deoxy-L-galactonate. Involved in the degradation of 3,6-anhydro-L-galactose, which is the major monomeric sugar of red macroalgae. Catalyzes the isomerization of 3,6-anhydrogalactonate (AHGA) to 2-keto-3-deoxy-galactonate (KDGal). The protein is 3,6-anhydro-alpha-L-galactonate cycloisomerase of Streptomyces coelicolor (strain ATCC BAA-471 / A3(2) / M145).